A 123-amino-acid chain; its full sequence is Ribosome-binding factor A (123 aa).

It belongs to the RbfA family. In terms of assembly, monomer. Binds 30S ribosomal subunits, but not 50S ribosomal subunits or 70S ribosomes.

The protein localises to the cytoplasm. Its function is as follows. One of several proteins that assist in the late maturation steps of the functional core of the 30S ribosomal subunit. Associates with free 30S ribosomal subunits (but not with 30S subunits that are part of 70S ribosomes or polysomes). Required for efficient processing of 16S rRNA. May interact with the 5'-terminal helix region of 16S rRNA. The chain is Ribosome-binding factor A from Desulfatibacillum aliphaticivorans.